Here is a 692-residue protein sequence, read N- to C-terminus: MEFLPLWLCLGFHFLIVEWRSGRGTATAASQGGCKVVDRVADCRSLNLASVPSGLPAHSRMLVLDANPLRVLWNHSLQAYPRLEDLSLHSCHLDRISHWAFHEQGHLQNLVLADNRLSENYKESATALHTLLRLRRLDLSGNSLTEDMAALMLQNLSSLEVVSLARNTLMRLDDSVFEGLERLVELDLQRNYIFEIEGGAFDGLTELRRLNLAYNNLPCIVDFSLTQLRFLNVSYNILEWFLAAREEAAFELEILDLSHNQLLFFPLLPQCGKLHTLLLQDNSMGFYRELYNTSSPQEMVAQFLLVDGNVTNITTVSLWEEFSSSDLSALRFLDMSQNQLRHLPDGFLKKTPSLSHLNLNQNCLTKLHIREHEPPGALTELDLSRNQLAELHLAPGLTGSLKNLRVFNLSSNQLLGVPTGLFHSASSITTLDMSHNQISLCPQTVPLDWEEPSSCVDFRNMASLRSLSLDGCGLKALQDCPFQGTSLTHLDLSSNWGILNGSVSPLSAVAPTLQVLSLRNVGLGSGAAEMDFSGFGNLRELDLSGNSLTSFPKFKGSSALQTLDLRRNSLTALPQRVVSEQPLRGLQTIYLSQNPYDCCGVEGWGALQHFKTIADLSMVTCNLSSKIIRVVELPEGIPQDCKWGQVDTGLFYLVLILPSCLTLLVASTVIFLTFKKPLLQVIKSRCHWSSIY.

The first 24 residues, 1–24, serve as a signal peptide directing secretion; the sequence is MEFLPLWLCLGFHFLIVEWRSGRG. Residues 25-650 lie on the Extracellular side of the membrane; that stretch reads TATAASQGGC…CKWGQVDTGL (626 aa). In terms of domain architecture, LRRNT spans 29-56; sequence ASQGGCKVVDRVADCRSLNLASVPSGLP. 10 LRR repeats span residues 58–79, 82–103, 106–127, 133–155, 158–179, 182–203, 206–227, 228–239, 251–272, and 273–294; these read HSRMLVLDANPLRVLWNHSLQA, RLEDLSLHSCHLDRISHWAFHE, HLQNLVLADNRLSENYKESATA, RLRRLDLSGNSLTEDMAALMLQN, SLEVVSLARNTLMRLDDSVFEG, RLVELDLQRNYIFEIEGGAFDG, ELRRLNLAYNNLPCIVDFSLTQ, LRFLNVSYNILE, ELEILDLSHNQLLFFPLLPQCG, and KLHTLLLQDNSMGFYRELYNTS. A glycan (N-linked (GlcNAc...) asparagine) is linked at asparagine 74. An N-linked (GlcNAc...) asparagine glycan is attached at asparagine 155. Asparagine 232 is a glycosylation site (N-linked (GlcNAc...) asparagine). N-linked (GlcNAc...) asparagine glycosylation is found at asparagine 292, asparagine 309, and asparagine 312. 11 LRR repeats span residues 329–350, 353–374, 377–398, 403–424, 427–448, 463–484, 486–507, 512–533, 537–558, 559–580, and 585–605; these read ALRFLDMSQNQLRHLPDGFLKK, SLSHLNLNQNCLTKLHIREHEP, ALTELDLSRNQLAELHLAPGLT, NLRVFNLSSNQLLGVPTGLFHS, SITTLDMSHNQISLCPQTVPLD, SLRSLSLDGCGLKALQDCPFQG, SLTHLDLSSNWGILNGSVSPLS, TLQVLSLRNVGLGSGAAEMDFS, NLRELDLSGNSLTSFPKFKGSS, ALQTLDLRRNSLTALPQRVVSE, and GLQTIYLSQNPYDCCGVEGWG. N-linked (GlcNAc...) asparagine glycosylation is present at asparagine 408. An N-linked (GlcNAc...) asparagine glycan is attached at asparagine 500. Residues 606–643 form the LRRCT domain; sequence ALQHFKTIADLSMVTCNLSSKIIRVVELPEGIPQDCKW. An N-linked (GlcNAc...) asparagine glycan is attached at asparagine 622. Residues 651–671 traverse the membrane as a helical segment; that stretch reads FYLVLILPSCLTLLVASTVIF. The Cytoplasmic segment spans residues 672 to 692; sequence LTFKKPLLQVIKSRCHWSSIY.

It belongs to the LRRC32/LRRC33 family. In terms of assembly, interacts (via LRR repeats) with TLR2, TLR3, TLR4, TLR9 and probably other Toll-like receptors. Interacts with CYBB/NOX2; the interaction is direct. Interacts with TGFB1; associates via disulfide bonds with the Latency-associated peptide chain (LAP) regulatory chain of TGFB1, leading to regulate activation of TGF-beta-1.

It is found in the cell membrane. The protein localises to the endoplasmic reticulum membrane. In terms of biological role, key regulator of transforming growth factor beta-1 (TGFB1) specifically required for microglia function in the nervous system. Required for activation of latent TGF-beta-1 in macrophages and microglia: associates specifically via disulfide bonds with the Latency-associated peptide (LAP), which is the regulatory chain of TGFB1, and regulates integrin-dependent activation of TGF-beta-1. TGF-beta-1 activation mediated by LRRC33/NRROS is highly localized: there is little spreading of TGF-beta-1 activated from one microglial cell to neighboring microglia, suggesting the existence of localized and selective activation of TGF-beta-1 by LRRC33/NRROS. Indirectly plays a role in Toll-like receptor (TLR) signaling: ability to inhibit TLR-mediated NF-kappa-B activation and cytokine production is probably a consequence of its role in TGF-beta-1 signaling. The protein is Transforming growth factor beta activator LRRC33 of Rattus norvegicus (Rat).